Consider the following 147-residue polypeptide: D-aminoacyl-tRNA deacylase (147 aa).

The short motif at 137-138 is the Gly-cisPro motif, important for rejection of L-amino acids element; the sequence is GP.

The protein belongs to the DTD family. Homodimer.

Its subcellular location is the cytoplasm. It catalyses the reaction glycyl-tRNA(Ala) + H2O = tRNA(Ala) + glycine + H(+). It carries out the reaction a D-aminoacyl-tRNA + H2O = a tRNA + a D-alpha-amino acid + H(+). Functionally, an aminoacyl-tRNA editing enzyme that deacylates mischarged D-aminoacyl-tRNAs. Also deacylates mischarged glycyl-tRNA(Ala), protecting cells against glycine mischarging by AlaRS. Acts via tRNA-based rather than protein-based catalysis; rejects L-amino acids rather than detecting D-amino acids in the active site. By recycling D-aminoacyl-tRNA to D-amino acids and free tRNA molecules, this enzyme counteracts the toxicity associated with the formation of D-aminoacyl-tRNA entities in vivo and helps enforce protein L-homochirality. Upon expression in B.subtilis strain 168 confers resistance to D-Tyr and D-Asp, suggesting it acts on both of these amino acids. The chain is D-aminoacyl-tRNA deacylase from Bacillus amyloliquefaciens (Bacillus velezensis).